The sequence spans 233 residues: Uracil-DNA glycosylase (233 aa).

Residue Asp70 is the Proton acceptor of the active site.

The protein belongs to the uracil-DNA glycosylase (UDG) superfamily. UNG family.

Its subcellular location is the cytoplasm. It carries out the reaction Hydrolyzes single-stranded DNA or mismatched double-stranded DNA and polynucleotides, releasing free uracil.. Excises uracil residues from the DNA which can arise as a result of misincorporation of dUMP residues by DNA polymerase or due to deamination of cytosine. The chain is Uracil-DNA glycosylase from Oleidesulfovibrio alaskensis (strain ATCC BAA-1058 / DSM 17464 / G20) (Desulfovibrio alaskensis).